The sequence spans 375 residues: Chaperone protein DnaJ (375 aa).

Residues 5–70 (DFYEVLGVER…SKRAAYDQYG (66 aa)) enclose the J domain. A CR-type zinc finger spans residues 134 to 212 (GTTVSIRVPT…CHGEGRVEEY (79 aa)). Residues Cys-147, Cys-150, Cys-164, Cys-167, Cys-186, Cys-189, Cys-200, and Cys-203 each contribute to the Zn(2+) site. CXXCXGXG motif repeat units lie at residues 147 to 154 (CKPCDGSG), 164 to 171 (CPTCGGIG), 186 to 193 (CPRCHGQG), and 200 to 207 (CNSCHGEG).

Belongs to the DnaJ family. As to quaternary structure, homodimer. Requires Zn(2+) as cofactor.

The protein localises to the cytoplasm. Its function is as follows. Participates actively in the response to hyperosmotic and heat shock by preventing the aggregation of stress-denatured proteins and by disaggregating proteins, also in an autonomous, DnaK-independent fashion. Unfolded proteins bind initially to DnaJ; upon interaction with the DnaJ-bound protein, DnaK hydrolyzes its bound ATP, resulting in the formation of a stable complex. GrpE releases ADP from DnaK; ATP binding to DnaK triggers the release of the substrate protein, thus completing the reaction cycle. Several rounds of ATP-dependent interactions between DnaJ, DnaK and GrpE are required for fully efficient folding. Also involved, together with DnaK and GrpE, in the DNA replication of plasmids through activation of initiation proteins. The chain is Chaperone protein DnaJ from Pseudomonas entomophila (strain L48).